The sequence spans 553 residues: Glycerol kinase 3 (553 aa).

Position 20 (threonine 20) interacts with substrate. Arginine 24 is an ATP binding site. Arginine 94, tyrosine 148, and aspartate 259 together coordinate substrate. Residues threonine 281, glycine 326, and 427–431 (GMTSN) each bind ATP.

Belongs to the FGGY kinase family.

It localises to the mitochondrion outer membrane. The protein resides in the cytoplasm. The enzyme catalyses glycerol + ATP = sn-glycerol 3-phosphate + ADP + H(+). Its pathway is polyol metabolism; glycerol degradation via glycerol kinase pathway; sn-glycerol 3-phosphate from glycerol: step 1/1. In terms of biological role, may be involved in the regulation of glycerol uptake and metabolism. In Homo sapiens (Human), this protein is Glycerol kinase 3.